A 159-amino-acid polypeptide reads, in one-letter code: Phosphopantetheine adenylyltransferase (159 aa).

Residue threonine 10 coordinates substrate. Residues 10-11 and histidine 18 each bind ATP; that span reads TF. Substrate contacts are provided by lysine 42, methionine 74, and arginine 88. ATP-binding positions include 89 to 91, glutamate 99, and 124 to 130; these read GLR and WSFISSS.

It belongs to the bacterial CoaD family. Homohexamer. It depends on Mg(2+) as a cofactor.

The protein resides in the cytoplasm. It carries out the reaction (R)-4'-phosphopantetheine + ATP + H(+) = 3'-dephospho-CoA + diphosphate. It participates in cofactor biosynthesis; coenzyme A biosynthesis; CoA from (R)-pantothenate: step 4/5. Reversibly transfers an adenylyl group from ATP to 4'-phosphopantetheine, yielding dephospho-CoA (dPCoA) and pyrophosphate. The protein is Phosphopantetheine adenylyltransferase of Klebsiella pneumoniae (strain 342).